Here is a 393-residue protein sequence, read N- to C-terminus: Cysteine protease ATG4B (393 aa).

Position 1 is an N-acetylmethionine (methionine 1). Serine 34 is modified (phosphoserine). Residue cysteine 74 is the Nucleophile of the active site. An S-nitrosocysteine modification is found at cysteine 189. Catalysis depends on residues aspartate 278 and histidine 280. S-nitrosocysteine occurs at positions 292 and 301. A disulfide bond links cysteine 292 and cysteine 361. 2 positions are modified to phosphoserine: serine 316 and serine 383. The LIR motif lies at 388–391 (FEIL). Serine 392 carries the post-translational modification Phosphoserine.

Belongs to the peptidase C54 family. Interacts with PFKP; promoting phosphorylation of ATG4B at Ser-34. Interacts with GBP7. In terms of processing, phosphorylation at Ser-383 and Ser-392 promotes autophagy by increasing protein delipidation activity without affecting proteolytic activation of ATG8 proteins. Phosphorylation at Ser-316 by ULK1 inhibits autophagy by decreasing both proteolytic activation and delipidation activities. Phosphorylation at Ser-316 is dephosphorylated by protein phosphatase 2A (PP2A). Phosphorylation at Ser-34 by AKT2 promotes its hydrolase activity, leading to increased proteolytic activation and delipidation of ATG8 family proteins. Phosphorylation at Ser-34 by AKT1 promotes mitochondrial localization and inhibition of the F1F0-ATP synthase activity, leading to elevation of mitochondrial reactive oxygen species (ROS). Ubiquitinated by RNF5, leading to its degradation by the proteasome. Post-translationally, S-nitrosylation at Cys-189 and Cys-292 in response to high glucose decreases both proteolytic activation and delipidation activities. In terms of processing, O-glycosylated by OGT, leading to increase protease activity, thereby promoting the proteolytic activation of ATG8 family proteins. Forms reversible intrachain disulfide bonds in response to oxidative stress. Forms interchain disulfide bonds, leading to formation of homooligomers in response to oxidation.

The protein localises to the cytoplasm. It localises to the cytosol. The protein resides in the cytoplasmic vesicle. It is found in the autophagosome. Its subcellular location is the endoplasmic reticulum. The protein localises to the mitochondrion. The enzyme catalyses [protein]-C-terminal L-amino acid-glycyl-phosphatidylethanolamide + H2O = [protein]-C-terminal L-amino acid-glycine + a 1,2-diacyl-sn-glycero-3-phosphoethanolamine. It carries out the reaction [protein]-C-terminal L-amino acid-glycyl-phosphatidylserine + H2O = [protein]-C-terminal L-amino acid-glycine + a 1,2-diacyl-sn-glycero-3-phospho-L-serine. With respect to regulation, inhibited by N-ethylmaleimide. Redox-regulated during autophagy since reducing conditions activate ATG4A whereas an oxidizing environment such as the presence of H(2)O(2) inhibits its activity. The cysteine protease activity compounds is inhibited by styrylquinoline compounds 4-28 and LV-320. Functionally, cysteine protease that plays a key role in autophagy by mediating both proteolytic activation and delipidation of ATG8 family proteins. Required for canonical autophagy (macroautophagy), non-canonical autophagy as well as for mitophagy. The protease activity is required for proteolytic activation of ATG8 family proteins: cleaves the C-terminal amino acid of ATG8 proteins MAP1LC3A, MAP1LC3B, MAP1LC3C, GABARAPL1, GABARAPL2 and GABARAP, to reveal a C-terminal glycine. Exposure of the glycine at the C-terminus is essential for ATG8 proteins conjugation to phosphatidylethanolamine (PE) and insertion to membranes, which is necessary for autophagy. Protease activity is also required to counteract formation of high-molecular weight conjugates of ATG8 proteins (ATG8ylation): acts as a deubiquitinating-like enzyme that removes ATG8 conjugated to other proteins, such as ATG3. In addition to the protease activity, also mediates delipidation of ATG8 family proteins. Catalyzes delipidation of PE-conjugated forms of ATG8 proteins during macroautophagy. Also involved in non-canonical autophagy, a parallel pathway involving conjugation of ATG8 proteins to single membranes at endolysosomal compartments, by catalyzing delipidation of ATG8 proteins conjugated to phosphatidylserine (PS). Compared to other members of the family (ATG4A, ATG4C or ATG4C), constitutes the major protein for proteolytic activation of ATG8 proteins, while it displays weaker delipidation activity than other ATG4 paralogs. Involved in phagophore growth during mitophagy independently of its protease activity and of ATG8 proteins: acts by regulating ATG9A trafficking to mitochondria and promoting phagophore-endoplasmic reticulum contacts during the lipid transfer phase of mitophagy. In terms of biological role, (Microbial infection) Mediates cleavage of an ATG8 protein homolog coded in the genome of cytopathogenic bovine viral diarrhea virus (BVDV). The protein is Cysteine protease ATG4B (ATG4B) of Bos taurus (Bovine).